The chain runs to 423 residues: Phospholipase A1-IIalpha (423 aa).

A coiled-coil region spans residues Ser194 to Ile217. Ser223 acts as the Acyl-ester intermediate in catalysis. Catalysis depends on charge relay system residues Ser223, Asp290, and His327. Positions His399–Asp423 are disordered. Residues Asp401–Asp410 are compositionally biased toward acidic residues. Over residues Ser411–Asp423 the composition is skewed to polar residues.

The protein belongs to the AB hydrolase superfamily. Lipase family.

The protein localises to the cytoplasm. Functionally, acylhydrolase that catalyzes the hydrolysis of phospholipids at the sn-1 position. The chain is Phospholipase A1-IIalpha from Arabidopsis thaliana (Mouse-ear cress).